The chain runs to 144 residues: Large ribosomal subunit protein uL16 (144 aa).

It belongs to the universal ribosomal protein uL16 family. In terms of assembly, part of the 50S ribosomal subunit.

Binds 23S rRNA and is also seen to make contacts with the A and possibly P site tRNAs. In Halalkalibacterium halodurans (strain ATCC BAA-125 / DSM 18197 / FERM 7344 / JCM 9153 / C-125) (Bacillus halodurans), this protein is Large ribosomal subunit protein uL16.